Consider the following 85-residue polypeptide: Beta-insect depressant toxin Lqh-dprIT3b (85 aa).

A signal peptide spans 1-21 (MKLLLLLTISASMLIEGLVNA). The LCN-type CS-alpha/beta domain occupies 22–82 (DGYIRGGDGC…EWDYETNTCG (61 aa)). 4 disulfide bridges follow: C31/C81, C35/C56, C42/C63, and C46/C65. G82 carries the post-translational modification Glycine amide.

The protein belongs to the long (4 C-C) scorpion toxin superfamily. Sodium channel inhibitor family. Beta subfamily. As to expression, expressed by the venom gland.

Its subcellular location is the secreted. Functionally, depressant insect beta-toxins cause a transient contraction paralysis followed by a slow flaccid paralysis. They bind voltage-independently at site-4 of sodium channels (Nav) and block action potentials, primarily by depolarizing the axonal membrane and suppressing the sodium current. This depressant toxin is active only on insects. It is found in a relatively small amount in the venom, and its activity on insects is 10-fold higher compared to other known depressant toxins. The polypeptide is Beta-insect depressant toxin Lqh-dprIT3b (Leiurus hebraeus (Hebrew deathstalker scorpion)).